The following is a 331-amino-acid chain: Olfactory receptor 7E178 (331 aa).

At 1 to 47 (MMDRYSFIMHQHRDDTVWCPSKIEEQNITRISEFHLMGLSDDLQLQP) the chain is on the extracellular side. Residue asparagine 27 is glycosylated (N-linked (GlcNAc...) asparagine). The helical transmembrane segment at 48–68 (ILFGLFLSMYLVTLLGNLLII) threads the bilayer. Residues 69–80 (LTVSSDSHLHSP) lie on the Cytoplasmic side of the membrane. The chain crosses the membrane as a helical span at residues 81–100 (MYFFLSNLSLADVSFTSTTL). The Extracellular portion of the chain corresponds to 101 to 119 (PKMIVDIQTHNRAISYSGC). A disulfide bridge links cysteine 119 with cysteine 201. A helical transmembrane segment spans residues 120-140 (LTQMSFFMLFGCLDSLLLTAM). Topologically, residues 141–164 (AYDRFVAICHPLHYQFIMNPRLCG) are cytoplasmic. Residues 165 to 185 (LLVFLSVLISLFVSQLHNSVV) form a helical membrane-spanning segment. The Extracellular segment spans residues 186-218 (LQLTYFKSVDISHFFCDPSQLLNLACSDTFTNN). The chain crosses the membrane as a helical span at residues 219 to 239 (IVMYFVGAISGFLPISGIFFS). Topologically, residues 240 to 266 (YYKIVSSILRMPSPGGKYKAFSTCGSH) are cytoplasmic. Residues 267–287 (LSVVCLFYGTGLGVYLSSAVS) form a helical membrane-spanning segment. Topologically, residues 288-293 (LSPRKG) are extracellular. The chain crosses the membrane as a helical span at residues 294–314 (AVASIVYTVVTPMLNPFIYSL). Residues 315–331 (RNQDIKRAMWRLLRKTV) lie on the Cytoplasmic side of the membrane.

Belongs to the G-protein coupled receptor 1 family.

The protein localises to the cell membrane. Odorant receptor. The sequence is that of Olfactory receptor 7E178 from Mus musculus (Mouse).